Consider the following 250-residue polypeptide: Cell division protein ZapD (250 aa).

Belongs to the ZapD family. As to quaternary structure, interacts with FtsZ.

Its subcellular location is the cytoplasm. In terms of biological role, cell division factor that enhances FtsZ-ring assembly. Directly interacts with FtsZ and promotes bundling of FtsZ protofilaments, with a reduction in FtsZ GTPase activity. In Serratia proteamaculans (strain 568), this protein is Cell division protein ZapD.